A 250-amino-acid polypeptide reads, in one-letter code: MPAPGSEGIWLWLGTAGMFLGMLYFIARGWGETDGRRQKFYIATILITAIAFVNYLAMALGFGLTFIEFGGEQHPIYWARYTDWLFTTPLLLYDLGLLAGADRNTIYSLVSLDVLMIGTGVVATLSAGSGVLSAGAERLVWWGISTAFLLVLLYFLFSSLSGRVANLPSDTRSTFKTLRNLVTVVWLVYPVWWLVGSEGLGLVGIGIETAGFMVIDLVAKVGFGIILLRSHGVLDGAAETTGTGATPADD.

7 consecutive transmembrane segments (helical) span residues E7–A27, I42–F62, Y81–A101, V114–A134, L139–S159, V185–I205, and I207–L227. K220 carries the post-translational modification N6-(retinylidene)lysine.

The protein belongs to the archaeal/bacterial/fungal opsin family. The covalent binding of retinal to the apoprotein, bacterioopsin, generates bacteriorhodopsin.

Its subcellular location is the membrane. In terms of biological role, light-driven proton pump. The polypeptide is Bacteriorhodopsin-I (bop) (Haloarcula marismortui (strain ATCC 43049 / DSM 3752 / JCM 8966 / VKM B-1809) (Halobacterium marismortui)).